Here is a 241-residue protein sequence, read N- to C-terminus: Biosynthetic peptidoglycan transglycosylase (241 aa).

The chain crosses the membrane as a helical span at residues 18–38 (GVIGIIALWMAGILIFAFLPV).

The protein belongs to the glycosyltransferase 51 family.

Its subcellular location is the cell inner membrane. It carries out the reaction [GlcNAc-(1-&gt;4)-Mur2Ac(oyl-L-Ala-gamma-D-Glu-L-Lys-D-Ala-D-Ala)](n)-di-trans,octa-cis-undecaprenyl diphosphate + beta-D-GlcNAc-(1-&gt;4)-Mur2Ac(oyl-L-Ala-gamma-D-Glu-L-Lys-D-Ala-D-Ala)-di-trans,octa-cis-undecaprenyl diphosphate = [GlcNAc-(1-&gt;4)-Mur2Ac(oyl-L-Ala-gamma-D-Glu-L-Lys-D-Ala-D-Ala)](n+1)-di-trans,octa-cis-undecaprenyl diphosphate + di-trans,octa-cis-undecaprenyl diphosphate + H(+). It participates in cell wall biogenesis; peptidoglycan biosynthesis. Its function is as follows. Peptidoglycan polymerase that catalyzes glycan chain elongation from lipid-linked precursors. In Yersinia pestis bv. Antiqua (strain Antiqua), this protein is Biosynthetic peptidoglycan transglycosylase.